The primary structure comprises 317 residues: Protein phosphatase 1 regulatory subunit 3C (317 aa).

A PP1-binding motif motif is present at residues 84-87 (RVVF). An interaction with EPM2A region spans residues 141–263 (PSSDYLSFRD…YRIVHVQWKP (123 aa)). In terms of domain architecture, CBM21 spans 149 to 257 (RDRFQKNFVC…NNEAQNYRIV (109 aa)).

In terms of assembly, interacts with PPP1CC catalytic subunit of PP1 and associates with glycogen. Forms complexes with glycogen phosphorylase, glycogen synthase and phosphorylase kinase which is necessary for its regulation of PP1 activity. Also interacts with EPM2A/laforin. Post-translationally, ubiquitinated by NHLRC1/malin in a EPM2A/laforin-dependent manner.

Functionally, acts as a glycogen-targeting subunit for PP1 and regulates its activity. Activates glycogen synthase, reduces glycogen phosphorylase activity and limits glycogen breakdown. Dramatically increases basal and insulin-stimulated glycogen synthesis upon overexpression in a variety of cell types. The sequence is that of Protein phosphatase 1 regulatory subunit 3C from Rattus norvegicus (Rat).